Consider the following 193-residue polypeptide: Ion-translocating oxidoreductase complex subunit A (193 aa).

A run of 6 helical transmembrane segments spans residues 5–25 (LLLFVGTVLVNNFVLVKFLGL), 39–59 (IGMGLATTFVLTLASVCAWMV), 62–82 (FILLPLGLIYLRTLAFILVIA), 102–122 (LLGIFLPLITTNCAVLGVALL), 134–154 (AVYGFSAAAGFSLVMVLFAAI), and 171–191 (SIALITAGLMSLAFMGFTGLV).

Belongs to the NqrDE/RnfAE family. In terms of assembly, the complex is composed of six subunits: RnfA, RnfB, RnfC, RnfD, RnfE and RnfG.

The protein localises to the cell inner membrane. Part of a membrane-bound complex that couples electron transfer with translocation of ions across the membrane. In Yersinia pestis (strain Pestoides F), this protein is Ion-translocating oxidoreductase complex subunit A.